We begin with the raw amino-acid sequence, 151 residues long: UPF0178 protein PST_0536 (151 aa).

Belongs to the UPF0178 family.

The chain is UPF0178 protein PST_0536 from Stutzerimonas stutzeri (strain A1501) (Pseudomonas stutzeri).